A 338-amino-acid polypeptide reads, in one-letter code: Glyceraldehyde-3-phosphate dehydrogenase (338 aa).

NAD(+)-binding positions include 13–14 (RI), aspartate 35, and arginine 80. D-glyceraldehyde 3-phosphate contacts are provided by residues 151-153 (SCT), threonine 182, 211-212 (TG), and arginine 234. Cysteine 152 functions as the Nucleophile in the catalytic mechanism. Asparagine 316 provides a ligand contact to NAD(+).

This sequence belongs to the glyceraldehyde-3-phosphate dehydrogenase family. Homotetramer.

Its subcellular location is the cytoplasm. It carries out the reaction D-glyceraldehyde 3-phosphate + phosphate + NAD(+) = (2R)-3-phospho-glyceroyl phosphate + NADH + H(+). Its pathway is carbohydrate degradation; glycolysis; pyruvate from D-glyceraldehyde 3-phosphate: step 1/5. This Sclerotinia sclerotiorum (White mold) protein is Glyceraldehyde-3-phosphate dehydrogenase (GPD).